The primary structure comprises 56 residues: Ovomucoid (56 aa).

Positions 6-56 (VDCSEYPKPACTLEYRPLCGSDNKTYGNKCNFCNAVVESNGTLTLSHFGKC) constitute a Kazal-like domain. 3 disulfide bridges follow: cysteine 8/cysteine 38, cysteine 16/cysteine 35, and cysteine 24/cysteine 56. A glycan (N-linked (GlcNAc...) asparagine) is linked at asparagine 45.

It localises to the secreted. The protein is Ovomucoid of Meleagris ocellata (Ocellated turkey).